Reading from the N-terminus, the 219-residue chain is Thiamine-phosphate synthase (219 aa).

Residues 48–52 and Asn-84 contribute to the 4-amino-2-methyl-5-(diphosphooxymethyl)pyrimidine site; that span reads QFRQK. Mg(2+)-binding residues include Asp-85 and Asp-104. Ser-123 is a 4-amino-2-methyl-5-(diphosphooxymethyl)pyrimidine binding site. 150-152 contacts 2-[(2R,5Z)-2-carboxy-4-methylthiazol-5(2H)-ylidene]ethyl phosphate; that stretch reads TPS. Residue Lys-153 coordinates 4-amino-2-methyl-5-(diphosphooxymethyl)pyrimidine. 2-[(2R,5Z)-2-carboxy-4-methylthiazol-5(2H)-ylidene]ethyl phosphate contacts are provided by residues Gly-181 and 199-200; that span reads IS.

It belongs to the thiamine-phosphate synthase family. Mg(2+) serves as cofactor.

The catalysed reaction is 2-[(2R,5Z)-2-carboxy-4-methylthiazol-5(2H)-ylidene]ethyl phosphate + 4-amino-2-methyl-5-(diphosphooxymethyl)pyrimidine + 2 H(+) = thiamine phosphate + CO2 + diphosphate. It carries out the reaction 2-(2-carboxy-4-methylthiazol-5-yl)ethyl phosphate + 4-amino-2-methyl-5-(diphosphooxymethyl)pyrimidine + 2 H(+) = thiamine phosphate + CO2 + diphosphate. It catalyses the reaction 4-methyl-5-(2-phosphooxyethyl)-thiazole + 4-amino-2-methyl-5-(diphosphooxymethyl)pyrimidine + H(+) = thiamine phosphate + diphosphate. The protein operates within cofactor biosynthesis; thiamine diphosphate biosynthesis; thiamine phosphate from 4-amino-2-methyl-5-diphosphomethylpyrimidine and 4-methyl-5-(2-phosphoethyl)-thiazole: step 1/1. Its function is as follows. Condenses 4-methyl-5-(beta-hydroxyethyl)thiazole monophosphate (THZ-P) and 2-methyl-4-amino-5-hydroxymethyl pyrimidine pyrophosphate (HMP-PP) to form thiamine monophosphate (TMP). The protein is Thiamine-phosphate synthase of Helicobacter pylori (strain ATCC 700392 / 26695) (Campylobacter pylori).